Here is a 420-residue protein sequence, read N- to C-terminus: 3-isopropylmalate dehydratase large subunit (420 aa).

The [4Fe-4S] cluster site is built by Cys-300, Cys-360, and Cys-363.

Belongs to the aconitase/IPM isomerase family. LeuC type 2 subfamily. In terms of assembly, heterodimer of LeuC and LeuD. [4Fe-4S] cluster is required as a cofactor.

It catalyses the reaction (2R,3S)-3-isopropylmalate = (2S)-2-isopropylmalate. The protein operates within amino-acid biosynthesis; L-leucine biosynthesis; L-leucine from 3-methyl-2-oxobutanoate: step 2/4. Catalyzes the isomerization between 2-isopropylmalate and 3-isopropylmalate, via the formation of 2-isopropylmaleate. The sequence is that of 3-isopropylmalate dehydratase large subunit from Halothermothrix orenii (strain H 168 / OCM 544 / DSM 9562).